Here is a 466-residue protein sequence, read N- to C-terminus: MSESDPVPGGRPGEVERATALSGELTGQGVHGVVLAYVDTAGIARVKTVPTAKLAAAAAWGVGMSPVFDTFLADDSIVGTDVLGSPDGDLRLYPDLDRLTMLAAQPGWAWAPVDRITQEGAPHPACGRTVLRRIVAGAAERHGITFRAAVEVEWVVGRGDAGGDAFVPAVSGPAYGAARQVELSDCAADLLAALAAQGVDVEQFHPEYAAGQFEVSVGALGPVAAADHSVLVRQTIRAVSARHGLRVSFAPAVLGQGVGNGGHLHLSAWRDGTNLHAGGTARCGMTAEAESFVAGVLGHLPALTALTAPSPASRLRLRPSQWAGVFTAWGRETREAALRIVTGTAGIRDRAANLEVKPVDLAANPYLALASVIAAGLDGLASSAPLPEEITGDPARLDPAAAAARGVRRLPVTLTESVAAFRTDGVLREALGPVLADAVIAVRLGEAGSVEGLDDDGVAAAYRWKY.

Residues 127-466 (GRTVLRRIVA…GVAAAYRWKY (340 aa)) form the GS catalytic domain. Positions 151 and 153 each coordinate Mg(2+). Position 202 (Glu-202) interacts with ATP. Mg(2+) contacts are provided by Glu-207 and Glu-214. Gly-259 contributes to the L-glutamate binding site. Residue His-263 participates in Mg(2+) binding. Residue Ser-267 coordinates ATP. Residues Arg-316 and Arg-334 each coordinate L-glutamate. Positions 334 and 339 each coordinate ATP. Glu-355 lines the Mg(2+) pocket.

It belongs to the glutamine synthetase family. Mg(2+) is required as a cofactor. As to expression, expressed in mycelium.

The catalysed reaction is spermine + L-glutamate + ATP = gamma-L-glutamylspermine + ADP + phosphate + H(+). It carries out the reaction spermidine + L-glutamate + ATP = gamma-L-glutamylspermidine + ADP + phosphate + H(+). The enzyme catalyses putrescine + L-glutamate + ATP = gamma-L-glutamylputrescine + ADP + phosphate + H(+). It catalyses the reaction cadaverine + L-glutamate + ATP = gamma-L-glutamylcadaverine + ADP + phosphate + H(+). Its pathway is amine and polyamine degradation; putrescine degradation. It functions in the pathway amine and polyamine degradation; spermidine degradation. The protein operates within amine and polyamine degradation; spermine degradation. Its function is as follows. Involved in the catabolism of polyamines. Catalyzes the ATP-dependent gamma-glutamylation of polyamines. Substrates include putrescine, cadaverine, spermidine and spermine, with a preference for long-chain polyamines spermidine and spermine. Is not able to compensate for the loss of glutamine synthetases (GSs). No complementation of the L-glutamine auxotrophy of an E.coli glnA mutant. Involved in morphological differentiation and in the production of secondary metabolites. Together with GlnA2, enables survival of S.coelicolor under exposure to high local environmental polyamine concentrations, which is toxic to the cells. The polypeptide is Gamma-glutamylpolyamine synthetase GlnA3 (Streptomyces coelicolor (strain ATCC BAA-471 / A3(2) / M145)).